The following is a 304-amino-acid chain: ADP-polyphosphate phosphotransferase (304 aa).

The protein belongs to the polyphosphate kinase 2 (PPK2) family. Class I subfamily.

The catalysed reaction is [phosphate](n) + ATP = [phosphate](n+1) + ADP. Its function is as follows. Uses inorganic polyphosphate (polyP) as a donor to convert ADP to ATP. This is ADP-polyphosphate phosphotransferase from Pseudomonas aeruginosa (strain ATCC 15692 / DSM 22644 / CIP 104116 / JCM 14847 / LMG 12228 / 1C / PRS 101 / PAO1).